We begin with the raw amino-acid sequence, 476 residues long: mRNA cap guanine-N(7) methyltransferase (476 aa).

Basic and acidic residues predominate over residues 1 to 14; sequence MANSAKAEEYEKMS. The segment at 1–146 is disordered; the sequence is MANSAKAEEY…KQKNLEEGHS (146 aa). Over residues 20–50 the composition is skewed to polar residues; it reads ASVNSETESSFNINENTTASGTGLSEKTSVC. Ser24, Ser28, and Ser29 each carry phosphoserine. Basic and acidic residues-rich tracts occupy residues 54–68 and 84–118; these read DIARKRKEFEDDLVK and LDPEIVPEEKDCGDAEGNSKKRKRETEDVPKDKSS. Ser118 is modified (phosphoserine). A Nuclear localization signal motif is present at residues 126–128; that stretch reads KRK. Positions 129 to 145 are enriched in basic and acidic residues; sequence IALEDVPEKQKNLEEGH. The mRNA cap 0 methyltransferase domain maps to 167-475; that stretch reads SRIFYLRNFN…IYLVFAFEKQ (309 aa). 176-177 serves as a coordination point for mRNA; sequence NN. S-adenosyl-L-methionine-binding residues include Lys180, Gly205, Asp227, Asp261, Gln284, and Tyr289.

It belongs to the class I-like SAM-binding methyltransferase superfamily. mRNA cap 0 methyltransferase family. As to quaternary structure, interacts with importin alpha, leading to stimulate both RNA-binding and methyltransferase activity. Interaction with importin alpha and beta is required for its nuclear localization, importin beta dissociating in response to RanGTP, allowing RNMT-importin alpha to bind RNA substrates. Interacts with elongating form of polymerase II and RNGTT. Interacts with RAMAC, this interaction significantly enhances RNA-binding and cap methyltransferase activity. Widely expressed.

The protein resides in the nucleus. It carries out the reaction a 5'-end (5'-triphosphoguanosine)-ribonucleoside in mRNA + S-adenosyl-L-methionine = a 5'-end (N(7)-methyl 5'-triphosphoguanosine)-ribonucleoside in mRNA + S-adenosyl-L-homocysteine. Methyltransferase activity is activated by RAMAC. In terms of biological role, catalytic subunit of the mRNA-capping methyltransferase RNMT:RAMAC complex that methylates the N7 position of the added guanosine to the 5'-cap structure of mRNAs. Binds RNA containing 5'-terminal GpppC. In Homo sapiens (Human), this protein is mRNA cap guanine-N(7) methyltransferase (RNMT).